Consider the following 151-residue polypeptide: U-scoloptoxin(17)-Er2a (151 aa).

The first 22 residues, 1–22, serve as a signal peptide directing secretion; it reads MKSFFVVFAIVFQATLVALSLA.

The protein belongs to the scoloptoxin-17 family. Contains 5 disulfide bonds. As to expression, expressed by the venom gland.

It localises to the secreted. The sequence is that of U-scoloptoxin(17)-Er2a from Ethmostigmus rubripes (Giant centipede).